Consider the following 254-residue polypeptide: Imidazole glycerol phosphate synthase subunit HisF (254 aa).

Catalysis depends on residues aspartate 12 and aspartate 131.

It belongs to the HisA/HisF family. As to quaternary structure, heterodimer of HisH and HisF.

It localises to the cytoplasm. It carries out the reaction 5-[(5-phospho-1-deoxy-D-ribulos-1-ylimino)methylamino]-1-(5-phospho-beta-D-ribosyl)imidazole-4-carboxamide + L-glutamine = D-erythro-1-(imidazol-4-yl)glycerol 3-phosphate + 5-amino-1-(5-phospho-beta-D-ribosyl)imidazole-4-carboxamide + L-glutamate + H(+). It functions in the pathway amino-acid biosynthesis; L-histidine biosynthesis; L-histidine from 5-phospho-alpha-D-ribose 1-diphosphate: step 5/9. Functionally, IGPS catalyzes the conversion of PRFAR and glutamine to IGP, AICAR and glutamate. The HisF subunit catalyzes the cyclization activity that produces IGP and AICAR from PRFAR using the ammonia provided by the HisH subunit. The sequence is that of Imidazole glycerol phosphate synthase subunit HisF from Corynebacterium aurimucosum (strain ATCC 700975 / DSM 44827 / CIP 107346 / CN-1) (Corynebacterium nigricans).